We begin with the raw amino-acid sequence, 428 residues long: Serine--tRNA ligase (428 aa).

231-233 provides a ligand contact to L-serine; sequence TAE. Residues 262-264 and Val278 each bind ATP; that span reads RRE. Glu285 serves as a coordination point for L-serine. 349 to 352 contributes to the ATP binding site; the sequence is EVSS. An L-serine-binding site is contributed by Ser384.

Belongs to the class-II aminoacyl-tRNA synthetase family. Type-1 seryl-tRNA synthetase subfamily. Homodimer. The tRNA molecule binds across the dimer.

The protein resides in the cytoplasm. It carries out the reaction tRNA(Ser) + L-serine + ATP = L-seryl-tRNA(Ser) + AMP + diphosphate + H(+). It catalyses the reaction tRNA(Sec) + L-serine + ATP = L-seryl-tRNA(Sec) + AMP + diphosphate + H(+). It participates in aminoacyl-tRNA biosynthesis; selenocysteinyl-tRNA(Sec) biosynthesis; L-seryl-tRNA(Sec) from L-serine and tRNA(Sec): step 1/1. Its function is as follows. Catalyzes the attachment of serine to tRNA(Ser). Is also able to aminoacylate tRNA(Sec) with serine, to form the misacylated tRNA L-seryl-tRNA(Sec), which will be further converted into selenocysteinyl-tRNA(Sec). The protein is Serine--tRNA ligase of Chlamydia muridarum (strain MoPn / Nigg).